The following is a 352-amino-acid chain: 4-hydroxy-2-oxovalerate aldolase 4 (352 aa).

One can recognise a Pyruvate carboxyltransferase domain in the interval 9–261 (IRVTDSSLRD…RTGIDTLKII (253 aa)). 17–18 (RD) serves as a coordination point for substrate. Mn(2+) is bound at residue Asp18. His21 functions as the Proton acceptor in the catalytic mechanism. Substrate is bound by residues Ser171 and His200. Mn(2+) contacts are provided by His200 and His202. Position 291 (Tyr291) interacts with substrate.

It belongs to the 4-hydroxy-2-oxovalerate aldolase family.

The catalysed reaction is (S)-4-hydroxy-2-oxopentanoate = acetaldehyde + pyruvate. The sequence is that of 4-hydroxy-2-oxovalerate aldolase 4 from Rhodococcus jostii (strain RHA1).